We begin with the raw amino-acid sequence, 137 residues long: Large ribosomal subunit protein uL16 (137 aa).

The segment covering 1 to 14 has biased composition (basic residues); that stretch reads MLQPNRRKFRKEHK. The interval 1-22 is disordered; the sequence is MLQPNRRKFRKEHKGRNEGLAT.

This sequence belongs to the universal ribosomal protein uL16 family. As to quaternary structure, part of the 50S ribosomal subunit.

Its function is as follows. Binds 23S rRNA and is also seen to make contacts with the A and possibly P site tRNAs. The chain is Large ribosomal subunit protein uL16 from Dechloromonas aromatica (strain RCB).